A 319-amino-acid polypeptide reads, in one-letter code: Solute carrier family 25 member 34 (319 aa).

The tract at residues 1–22 (MNSAFSGPSSPTPGPSPPRPPL) is disordered. The span at 10–22 (SPTPGPSPPRPPL) shows a compositional bias: pro residues. Solcar repeat units lie at residues 22-115 (LWPP…MQAA), 119-212 (DGPC…AKDW), and 222-313 (LSSL…LRQR). 6 helical membrane-spanning segments follow: residues 25–45 (PLDF…TNPL), 63–83 (SYRR…RTDG), 116–138 (GVTD…GAFI), 188–209 (VNGA…FSSA), 224–244 (SLNT…IMTP), and 296–319 (LAPH…PYTH).

It belongs to the mitochondrial carrier (TC 2.A.29) family.

It localises to the mitochondrion inner membrane. The protein is Solute carrier family 25 member 34 (slc25a34) of Danio rerio (Zebrafish).